We begin with the raw amino-acid sequence, 571 residues long: Origin recognition complex subunit 5 (571 aa).

2 disordered regions span residues 90–142 (DDEY…YDDD) and 404–430 (QIYP…GRQL). Low complexity-rich tracts occupy residues 107–133 (NNNN…NNND) and 407–416 (PPQQVPQQQK). A compositionally biased stretch (basic and acidic residues) spans 417-428 (QQEKEKEKEKGR).

Belongs to the ORC1 family. As to quaternary structure, ORC is composed of six subunits.

Its subcellular location is the nucleus. Its function is as follows. Component of the origin recognition complex (ORC) that binds origins of replication. DNA-binding is ATP-dependent, however specific DNA sequences that define origins of replication have not been identified so far. ORC is required to assemble the pre-replication complex necessary to initiate DNA replication. The protein is Origin recognition complex subunit 5 (orcE) of Dictyostelium discoideum (Social amoeba).